Here is a 244-residue protein sequence, read N- to C-terminus: CTD nuclear envelope phosphatase 1 (244 aa).

The helical transmembrane segment at 7–29 (LLGLRTFVAFAAKLWSFFIYLLR) threads the bilayer. In terms of domain architecture, FCP1 homology spans 57-224 (AQVKRKILVL…LNLLPMLDAL (168 aa)).

This sequence belongs to the dullard family. As to quaternary structure, (Microbial infection) Interacts with Chandipura virus matrix protein. Interacts with CNEP1R1; the complex dephosphorylates LPIN1 and LPIN2. In terms of tissue distribution, muscle specific with lower expression in other metabolic tissues.

The protein resides in the endoplasmic reticulum membrane. The protein localises to the nucleus membrane. The catalysed reaction is O-phospho-L-seryl-[protein] + H2O = L-seryl-[protein] + phosphate. It catalyses the reaction O-phospho-L-threonyl-[protein] + H2O = L-threonyl-[protein] + phosphate. In terms of biological role, serine/threonine protein phosphatase forming with CNEP1R1 an active phosphatase complex that dephosphorylates and may activate LPIN1 and LPIN2. LPIN1 and LPIN2 are phosphatidate phosphatases that catalyze the conversion of phosphatidic acid to diacylglycerol and control the metabolism of fatty acids at different levels. May indirectly modulate the lipid composition of nuclear and/or endoplasmic reticulum membranes and be required for proper nuclear membrane morphology and/or dynamics. May also indirectly regulate the production of lipid droplets and triacylglycerol. May antagonize BMP signaling. The polypeptide is CTD nuclear envelope phosphatase 1 (CTDNEP1) (Homo sapiens (Human)).